Here is a 1312-residue protein sequence, read N- to C-terminus: Bifunctional protein PutA (1312 aa).

Residues 228 to 574 (LSRSLNRIIG…SFVNRIADNT (347 aa)) are proline dehydrogenase. Residues 653–1119 (QPVAEGEMQP…LSSRPQDAVG (467 aa)) form an aldehyde dehydrogenase region. Active-site residues include Glu-883 and Cys-917.

It in the N-terminal section; belongs to the proline dehydrogenase family. This sequence in the C-terminal section; belongs to the aldehyde dehydrogenase family. FAD is required as a cofactor.

It catalyses the reaction L-proline + a quinone = (S)-1-pyrroline-5-carboxylate + a quinol + H(+). The catalysed reaction is L-glutamate 5-semialdehyde + NAD(+) + H2O = L-glutamate + NADH + 2 H(+). Its pathway is amino-acid degradation; L-proline degradation into L-glutamate; L-glutamate from L-proline: step 1/2. It participates in amino-acid degradation; L-proline degradation into L-glutamate; L-glutamate from L-proline: step 2/2. Functionally, oxidizes proline to glutamate for use as a carbon and nitrogen source and also function as a transcriptional repressor of the put operon. This chain is Bifunctional protein PutA (putA), found in Klebsiella aerogenes (Enterobacter aerogenes).